Here is a 395-residue protein sequence, read N- to C-terminus: MTAPASSPASPYDPLDIAVELIRCPSVTPDEGGALGVLEKWLAPLGFKCERMRFSAEGTPDVDNLYARLGSGHPHFCFAGHTDVVPVGQADAWSVDPFAADIKDGRLYGRGAADMKSAVASFVAAAERISREGFQGSISLLITGDEEGPSINGTRKMLEKLAARNETIDHCIVGEPTSVEKLGDMIKVGRRGSINGWLTVQGTQGHVAYPHLADNPVPRLLEMLRRLDAHVLDEGTDHFQPSNLEVTTVDIGNTATNVIPGSARATVNIRFNDLHTGASLDKWMRGVLDAVTAEMGGSYSFKTSVSGEAFITEPGAFSALIAEAAKEVTGITPELSTTGGTSDARFIRAYAPVVEIGLPNATMHKADENTGVSEIRQLADIYETVLRGYFAGRAS.

H81 is a Zn(2+) binding site. D83 is a catalytic residue. D114 is a binding site for Zn(2+). The Proton acceptor role is filled by E146. Residues E147, E175, and H364 each contribute to the Zn(2+) site.

This sequence belongs to the peptidase M20A family. DapE subfamily. Homodimer. Zn(2+) is required as a cofactor. Requires Co(2+) as cofactor.

The enzyme catalyses N-succinyl-(2S,6S)-2,6-diaminopimelate + H2O = (2S,6S)-2,6-diaminopimelate + succinate. It participates in amino-acid biosynthesis; L-lysine biosynthesis via DAP pathway; LL-2,6-diaminopimelate from (S)-tetrahydrodipicolinate (succinylase route): step 3/3. Functionally, catalyzes the hydrolysis of N-succinyl-L,L-diaminopimelic acid (SDAP), forming succinate and LL-2,6-diaminopimelate (DAP), an intermediate involved in the bacterial biosynthesis of lysine and meso-diaminopimelic acid, an essential component of bacterial cell walls. In Parvibaculum lavamentivorans (strain DS-1 / DSM 13023 / NCIMB 13966), this protein is Succinyl-diaminopimelate desuccinylase.